We begin with the raw amino-acid sequence, 197 residues long: Transcription factor FapR (197 aa).

Belongs to the FapR family.

Functionally, transcriptional factor involved in regulation of membrane lipid biosynthesis by repressing genes involved in fatty acid and phospholipid metabolism. This is Transcription factor FapR from Bacillus cytotoxicus (strain DSM 22905 / CIP 110041 / 391-98 / NVH 391-98).